The chain runs to 473 residues: Photosystem II CP43 reaction center protein (473 aa).

A propeptide spanning residues 1–14 (MKTLYSLRRFYHVE) is cleaved from the precursor. Threonine 15 carries the N-acetylthreonine modification. Phosphothreonine is present on threonine 15. 5 consecutive transmembrane segments (helical) span residues 69–93 (LFEVAHFVPEKPMYEQGLILLPHLA), 134–155 (LLGPETLEESFPFFGYVWKDRN), 178–200 (KALYFGGVYDTWAPGGGDVRKIT), 255–275 (KPFAWARRALVWSGEAYLSYS), and 291–312 (WFNNTAYPSEFYGPTGPEASQA). Glutamate 367 provides a ligand contact to [CaMn4O5] cluster. A helical transmembrane segment spans residues 447 to 471 (RARAAAAGFEKGIDRDFEPVLSMTP).

The protein belongs to the PsbB/PsbC family. PsbC subfamily. In terms of assembly, PSII is composed of 1 copy each of membrane proteins PsbA, PsbB, PsbC, PsbD, PsbE, PsbF, PsbH, PsbI, PsbJ, PsbK, PsbL, PsbM, PsbT, PsbX, PsbY, PsbZ, Psb30/Ycf12, at least 3 peripheral proteins of the oxygen-evolving complex and a large number of cofactors. It forms dimeric complexes. The cofactor is Binds multiple chlorophylls and provides some of the ligands for the Ca-4Mn-5O cluster of the oxygen-evolving complex. It may also provide a ligand for a Cl- that is required for oxygen evolution. PSII binds additional chlorophylls, carotenoids and specific lipids..

The protein resides in the plastid. Its subcellular location is the chloroplast thylakoid membrane. One of the components of the core complex of photosystem II (PSII). It binds chlorophyll and helps catalyze the primary light-induced photochemical processes of PSII. PSII is a light-driven water:plastoquinone oxidoreductase, using light energy to abstract electrons from H(2)O, generating O(2) and a proton gradient subsequently used for ATP formation. This Manihot esculenta (Cassava) protein is Photosystem II CP43 reaction center protein.